The primary structure comprises 245 residues: 1-(5-phosphoribosyl)-5-[(5-phosphoribosylamino)methylideneamino] imidazole-4-carboxamide isomerase (245 aa).

The active-site Proton acceptor is the aspartate 11. The Proton donor role is filled by aspartate 132.

The protein belongs to the HisA/HisF family.

It localises to the cytoplasm. The catalysed reaction is 1-(5-phospho-beta-D-ribosyl)-5-[(5-phospho-beta-D-ribosylamino)methylideneamino]imidazole-4-carboxamide = 5-[(5-phospho-1-deoxy-D-ribulos-1-ylimino)methylamino]-1-(5-phospho-beta-D-ribosyl)imidazole-4-carboxamide. It participates in amino-acid biosynthesis; L-histidine biosynthesis; L-histidine from 5-phospho-alpha-D-ribose 1-diphosphate: step 4/9. The protein is 1-(5-phosphoribosyl)-5-[(5-phosphoribosylamino)methylideneamino] imidazole-4-carboxamide isomerase of Xanthobacter autotrophicus (strain ATCC BAA-1158 / Py2).